The following is a 213-amino-acid chain: uncharacterized protein (213 aa).

Residues 2 to 91 (SRHPEVKWAQ…AEAKWWKKLV (90 aa)) form the CS domain. The tract at residues 168 to 213 (GMGGMGGMDEFEDESDDEEEVSKPQDAEKAAEAGKSQESDAKAETS) is disordered. Over residues 176 to 187 (DEFEDESDDEEE) the composition is skewed to acidic residues. A compositionally biased stretch (basic and acidic residues) spans 188-213 (VSKPQDAEKAAEAGKSQESDAKAETS).

This sequence belongs to the p23/wos2 family.

This is an uncharacterized protein from Oryza sativa subsp. japonica (Rice).